We begin with the raw amino-acid sequence, 341 residues long: Solute carrier family 25 member 43 (341 aa).

3 Solcar repeats span residues 11 to 101, 105 to 185, and 200 to 298; these read TGGQ…TDDL, SQWS…LLVY, and SLPQ…LYQN. A run of 6 helical transmembrane segments spans residues 16–36, 68–88, 110–130, 166–186, 205–225, and 262–282; these read LLCA…LELA, LWKG…VQLA, IMAG…TDLI, GVSL…LVYM, FANV…FETV, and VLGL…YFGI.

Belongs to the mitochondrial carrier (TC 2.A.29) family.

The protein localises to the mitochondrion inner membrane. This is Solute carrier family 25 member 43 (SLC25A43) from Homo sapiens (Human).